The following is a 309-amino-acid chain: Taste receptor type 2 member 124 (309 aa).

At 1–7 (MVSVLHS) the chain is on the extracellular side. The helical transmembrane segment at 8–28 (ISTIIIIAEFVWGNLSNGLIV) threads the bilayer. Residues 29–46 (LKNCLDWINIKELSTLDQ) are Cytoplasmic-facing. The helical transmembrane segment at 47-67 (ILILLAISRISLIWETLLMWV) threads the bilayer. Residues 68 to 81 (KDKLISSITIEELK) are Extracellular-facing. The helical transmembrane segment at 82–102 (MIMFSFMLSSHFSLWLATALS) threads the bilayer. The Cytoplasmic portion of the chain corresponds to 103–127 (TFYLFRIANCSWQIFLYLKWRLKHL). Residues 128–148 (IVQMLLGSVMFLIANIIQITI) form a helical membrane-spanning segment. The Extracellular segment spans residues 149 to 182 (TLEKRFYQYKGNTSVNSIQNEFALLIEMMLFNMT). N-linked (GlcNAc...) asparagine glycosylation is found at asparagine 160 and asparagine 180. The chain crosses the membrane as a helical span at residues 183–203 (IFSVIPFLLALISFFLLIFSL). The Cytoplasmic segment spans residues 204 to 227 (WKHLQRMQLNSREDRDPSTKAHRN). Residues 228–248 (ALGIMVSFLLLYTMYVLSLLI) form a helical membrane-spanning segment. At 249 to 261 (SWIAQKNQSELVH) the chain is on the extracellular side. Residue asparagine 255 is glycosylated (N-linked (GlcNAc...) asparagine). Residues 262-282 (IICMITSLLNPSVHSSILILG) traverse the membrane as a helical segment. At 283–309 (NFKLKQSSLCILRHLGCRLKSQNTPTT) the chain is on the cytoplasmic side.

It belongs to the G-protein coupled receptor T2R family.

The protein localises to the membrane. In terms of biological role, putative taste receptor which may play a role in the perception of bitterness. The sequence is that of Taste receptor type 2 member 124 from Rattus norvegicus (Rat).